Here is a 268-residue protein sequence, read N- to C-terminus: Tryptophan synthase alpha chain (268 aa).

Residues Glu-49 and Asp-60 each act as proton acceptor in the active site.

Belongs to the TrpA family. Tetramer of two alpha and two beta chains.

The catalysed reaction is (1S,2R)-1-C-(indol-3-yl)glycerol 3-phosphate + L-serine = D-glyceraldehyde 3-phosphate + L-tryptophan + H2O. It participates in amino-acid biosynthesis; L-tryptophan biosynthesis; L-tryptophan from chorismate: step 5/5. Functionally, the alpha subunit is responsible for the aldol cleavage of indoleglycerol phosphate to indole and glyceraldehyde 3-phosphate. The chain is Tryptophan synthase alpha chain from Haemophilus influenzae (strain PittGG).